Reading from the N-terminus, the 284-residue chain is D-tagatose-1,6-bisphosphate aldolase subunit GatY (284 aa).

Residue D82 is the Proton donor of the active site. Zn(2+)-binding residues include H83 and H180. G181 is a binding site for dihydroxyacetone phosphate. H208 lines the Zn(2+) pocket. Dihydroxyacetone phosphate is bound by residues 209–211 (GAS) and 230–233 (NVAT).

This sequence belongs to the class II fructose-bisphosphate aldolase family. TagBP aldolase GatY subfamily. In terms of assembly, forms a complex with GatZ. Zn(2+) serves as cofactor.

It catalyses the reaction D-tagatofuranose 1,6-bisphosphate = D-glyceraldehyde 3-phosphate + dihydroxyacetone phosphate. It participates in carbohydrate metabolism; D-tagatose 6-phosphate degradation; D-glyceraldehyde 3-phosphate and glycerone phosphate from D-tagatose 6-phosphate: step 2/2. Its function is as follows. Catalytic subunit of the tagatose-1,6-bisphosphate aldolase GatYZ, which catalyzes the reversible aldol condensation of dihydroxyacetone phosphate (DHAP or glycerone-phosphate) with glyceraldehyde 3-phosphate (G3P) to produce tagatose 1,6-bisphosphate (TBP). Requires GatZ subunit for full activity and stability. Is involved in the catabolism of galactitol. This chain is D-tagatose-1,6-bisphosphate aldolase subunit GatY, found in Salmonella enteritidis PT4 (strain P125109).